The primary structure comprises 541 residues: Carboxypeptidase Y homolog A (541 aa).

The first 17 residues, Met-1–Val-17, serve as a signal peptide directing secretion. Positions Pro-18 to Lys-122 are excised as a propeptide. Disulfide bonds link Cys-177/Cys-416, Cys-311/Cys-325, Cys-335/Cys-358, Cys-342/Cys-351, and Cys-380/Cys-386. N-linked (GlcNAc...) asparagine glycosylation is present at Asn-208. Ser-264 is an active-site residue. The active site involves Asp-455. 3 N-linked (GlcNAc...) asparagine glycosylation sites follow: Asn-485, Asn-491, and Asn-506. His-517 is a catalytic residue.

This sequence belongs to the peptidase S10 family.

Its subcellular location is the vacuole. The catalysed reaction is Release of a C-terminal amino acid with broad specificity.. Vacuolar carboxypeptidase involved in degradation of small peptides. Digests preferentially peptides containing an aliphatic or hydrophobic residue in P1' position, as well as methionine, leucine or phenylalanine in P1 position of ester substrate. In Uncinocarpus reesii (strain UAMH 1704), this protein is Carboxypeptidase Y homolog A (cpyA).